We begin with the raw amino-acid sequence, 377 residues long: uncharacterized protein (377 aa).

The interval 1–46 (MLAGLRRRGSMTTPPGPEIPPPHQGGFYSAGHHPQRPWPETPPPKT) is disordered. Composition is skewed to pro residues over residues 14–23 (PPGPEIPPPH) and 36–45 (RPWPETPPPK). The helical transmembrane segment at 53 to 73 (MLGAVALLAVVGVTVAVTLAV) threads the bilayer. The interval 77–107 (DKRDAIPPGSGVSGSPTASDIASADDSGPVS) is disordered.

Its subcellular location is the cell inner membrane. Its function is as follows. May be involved in the ESX-1 / type VII specialized secretion system (T7SS), which exports several proteins including EsxA and EsxB. Involved in DNA conjugation in the recipient strain. This is an uncharacterized protein from Mycolicibacterium smegmatis (strain MKD8) (Mycobacterium smegmatis).